A 122-amino-acid polypeptide reads, in one-letter code: Large ribosomal subunit protein uL14c (122 aa).

The protein belongs to the universal ribosomal protein uL14 family. In terms of assembly, part of the 50S ribosomal subunit.

Its subcellular location is the plastid. The protein localises to the chloroplast. In terms of biological role, binds to 23S rRNA. The sequence is that of Large ribosomal subunit protein uL14c from Angiopteris evecta (Mule's foot fern).